We begin with the raw amino-acid sequence, 264 residues long: Catechol O-methyltransferase B (264 aa).

The N-terminal stretch at 1–29 (MLGVLLCWCLGASVLLYVLYSWLIPAAVQ) is a signal peptide. An N-linked (GlcNAc...) asparagine glycan is attached at Asn31. S-adenosyl-L-methionine contacts are provided by Val92, Ser122, Glu140, and Asp191. Asp191 lines the Mg(2+) pocket. Lys194 is a binding site for substrate. Mg(2+) contacts are provided by Asp219 and Asn220. Residues Asn220 and Glu249 each coordinate substrate.

This sequence belongs to the class I-like SAM-binding methyltransferase superfamily. Cation-dependent O-methyltransferase family. Mg(2+) serves as cofactor. Strongly expressed in eye, diencephalon, spinal cord, hindbrain, liver, kidney and telencephalon. Also detected at very low levels in muscle, spleen, anterior gut and heart. In eye, expressed strongly in retina. In brain, expressed in the central part of the telencephalon, the periventricular gray zone of the optic tectum, the periglomerular nucleus, the olfactory bulb, and the region adjacent to the diencephalic ventricle in the hypothalamus. Expressed in gill, with strongest expression in gill filaments nearest the gill arch, and in esophageal epithelium.

Its subcellular location is the secreted. The enzyme catalyses a catechol + S-adenosyl-L-methionine = a guaiacol + S-adenosyl-L-homocysteine + H(+). Catalyzes the O-methylation, and thereby the inactivation, of catecholamine neurotransmitters and catechol hormones. This Danio rerio (Zebrafish) protein is Catechol O-methyltransferase B.